The chain runs to 198 residues: Pyridoxal 5'-phosphate synthase subunit PdxT (198 aa).

Residue 49–51 (GES) participates in L-glutamine binding. Catalysis depends on cysteine 81, which acts as the Nucleophile. Residues arginine 112 and 140 to 141 (IR) contribute to the L-glutamine site. Catalysis depends on charge relay system residues histidine 176 and glutamate 178.

It belongs to the glutaminase PdxT/SNO family. As to quaternary structure, in the presence of PdxS, forms a dodecamer of heterodimers. Only shows activity in the heterodimer.

The catalysed reaction is aldehydo-D-ribose 5-phosphate + D-glyceraldehyde 3-phosphate + L-glutamine = pyridoxal 5'-phosphate + L-glutamate + phosphate + 3 H2O + H(+). It carries out the reaction L-glutamine + H2O = L-glutamate + NH4(+). It participates in cofactor biosynthesis; pyridoxal 5'-phosphate biosynthesis. In terms of biological role, catalyzes the hydrolysis of glutamine to glutamate and ammonia as part of the biosynthesis of pyridoxal 5'-phosphate. The resulting ammonia molecule is channeled to the active site of PdxS. The chain is Pyridoxal 5'-phosphate synthase subunit PdxT from Methanocella arvoryzae (strain DSM 22066 / NBRC 105507 / MRE50).